A 286-amino-acid polypeptide reads, in one-letter code: Bifunctional protein FolD (286 aa).

NADP(+) contacts are provided by residues 165–167 (GRS) and S190.

The protein belongs to the tetrahydrofolate dehydrogenase/cyclohydrolase family. In terms of assembly, homodimer.

It carries out the reaction (6R)-5,10-methylene-5,6,7,8-tetrahydrofolate + NADP(+) = (6R)-5,10-methenyltetrahydrofolate + NADPH. The enzyme catalyses (6R)-5,10-methenyltetrahydrofolate + H2O = (6R)-10-formyltetrahydrofolate + H(+). It participates in one-carbon metabolism; tetrahydrofolate interconversion. Catalyzes the oxidation of 5,10-methylenetetrahydrofolate to 5,10-methenyltetrahydrofolate and then the hydrolysis of 5,10-methenyltetrahydrofolate to 10-formyltetrahydrofolate. In Paraburkholderia xenovorans (strain LB400), this protein is Bifunctional protein FolD.